The following is a 571-amino-acid chain: 15-cis-phytoene desaturase, chloroplastic/chromoplastic (571 aa).

The transit peptide at 1–96 directs the protein to the chloroplast and chromoplast; that stretch reads MDTGCLSSMN…FRNSERPSKP (96 aa). FAD contacts are provided by residues Ala107, 126 to 127, Lys134, 151 to 152, and Tyr157; these read EA and HI. Substrate is bound at residue Arg292. The FAD site is built by Ile334 and Asp523. Residue Ala531 participates in substrate binding. Met533 serves as a coordination point for FAD.

Belongs to the carotenoid/retinoid oxidoreductase family. Homotetramer. The cofactor is FAD.

The protein localises to the plastid. It is found in the chloroplast. It localises to the chromoplast. The protein resides in the membrane. The enzyme catalyses 2 a plastoquinone + 15-cis-phytoene = 9,9',15-tri-cis-zeta-carotene + 2 a plastoquinol. Its pathway is carotenoid biosynthesis; lycopene biosynthesis. Functionally, converts phytoene into zeta-carotene via the intermediary of phytofluene by the symmetrical introduction of two double bonds at the C-11 and C-11' positions of phytoene with a concomitant isomerization of two neighboring double bonds at the C9 and C9' positions from trans to cis. This Zea mays (Maize) protein is 15-cis-phytoene desaturase, chloroplastic/chromoplastic (PDS1).